A 421-amino-acid polypeptide reads, in one-letter code: NAD-specific glutamate dehydrogenase (421 aa).

Substrate-binding residues include K71 and K95. K107 acts as the Proton donor in catalysis. Residues T191 and N222 each coordinate NAD(+). Residue S355 participates in substrate binding.

It belongs to the Glu/Leu/Phe/Val dehydrogenases family. As to quaternary structure, homohexamer.

The enzyme catalyses L-glutamate + NAD(+) + H2O = 2-oxoglutarate + NH4(+) + NADH + H(+). This chain is NAD-specific glutamate dehydrogenase (gluD), found in Clostridioides difficile (Peptoclostridium difficile).